Consider the following 381-residue polypeptide: Succinyl-diaminopimelate desuccinylase (381 aa).

Residue H68 participates in Zn(2+) binding. D70 is an active-site residue. D101 provides a ligand contact to Zn(2+). E135 acts as the Proton acceptor in catalysis. Zn(2+)-binding residues include E136, E164, and H350.

The protein belongs to the peptidase M20A family. DapE subfamily. As to quaternary structure, homodimer. Zn(2+) is required as a cofactor. It depends on Co(2+) as a cofactor.

The catalysed reaction is N-succinyl-(2S,6S)-2,6-diaminopimelate + H2O = (2S,6S)-2,6-diaminopimelate + succinate. It participates in amino-acid biosynthesis; L-lysine biosynthesis via DAP pathway; LL-2,6-diaminopimelate from (S)-tetrahydrodipicolinate (succinylase route): step 3/3. Functionally, catalyzes the hydrolysis of N-succinyl-L,L-diaminopimelic acid (SDAP), forming succinate and LL-2,6-diaminopimelate (DAP), an intermediate involved in the bacterial biosynthesis of lysine and meso-diaminopimelic acid, an essential component of bacterial cell walls. This is Succinyl-diaminopimelate desuccinylase from Neisseria meningitidis serogroup A / serotype 4A (strain DSM 15465 / Z2491).